Here is a 73-residue protein sequence, read N- to C-terminus: Large ribosomal subunit protein bL31 (73 aa).

The Zn(2+) site is built by cysteine 16, cysteine 18, cysteine 37, and cysteine 40.

The protein belongs to the bacterial ribosomal protein bL31 family. Type A subfamily. As to quaternary structure, part of the 50S ribosomal subunit. Zn(2+) is required as a cofactor.

Its function is as follows. Binds the 23S rRNA. The protein is Large ribosomal subunit protein bL31 of Pseudomonas savastanoi pv. phaseolicola (strain 1448A / Race 6) (Pseudomonas syringae pv. phaseolicola (strain 1448A / Race 6)).